The chain runs to 137 residues: Ribonuclease VapC3 (137 aa).

The 118-residue stretch at 12–129 (VVVDASAMVD…LTTDERLARA (118 aa)) folds into the PINc domain. Residues D15 and D105 each contribute to the Mg(2+) site.

Belongs to the PINc/VapC protein family. Mg(2+) is required as a cofactor.

Functionally, toxic component of a type II toxin-antitoxin (TA) system. An RNase. Its toxic effect is neutralized by coexpression with cognate antitoxin VapB3. This chain is Ribonuclease VapC3, found in Mycobacterium tuberculosis (strain CDC 1551 / Oshkosh).